A 341-amino-acid polypeptide reads, in one-letter code: UDP-N-acetylenolpyruvoylglucosamine reductase (341 aa).

Residues 19-191 (MAVRAAHFCQ…TAVRFRLSRR (173 aa)) form the FAD-binding PCMH-type domain. The active site involves Arg167. Ser241 serves as the catalytic Proton donor. Residue Glu337 is part of the active site.

This sequence belongs to the MurB family. It depends on FAD as a cofactor.

The protein localises to the cytoplasm. The enzyme catalyses UDP-N-acetyl-alpha-D-muramate + NADP(+) = UDP-N-acetyl-3-O-(1-carboxyvinyl)-alpha-D-glucosamine + NADPH + H(+). The protein operates within cell wall biogenesis; peptidoglycan biosynthesis. Functionally, cell wall formation. The polypeptide is UDP-N-acetylenolpyruvoylglucosamine reductase (Chromobacterium violaceum (strain ATCC 12472 / DSM 30191 / JCM 1249 / CCUG 213 / NBRC 12614 / NCIMB 9131 / NCTC 9757 / MK)).